The chain runs to 338 residues: D-erythrose-4-phosphate dehydrogenase (338 aa).

12-13 (RI) contributes to the NAD(+) binding site. Residues 154–156 (SCT), R200, 213–214 (TK), and R236 each bind substrate. C155 acts as the Nucleophile in catalysis. Residue N318 coordinates NAD(+).

It belongs to the glyceraldehyde-3-phosphate dehydrogenase family. Epd subfamily. In terms of assembly, homotetramer.

The protein resides in the cytoplasm. It carries out the reaction D-erythrose 4-phosphate + NAD(+) + H2O = 4-phospho-D-erythronate + NADH + 2 H(+). It functions in the pathway cofactor biosynthesis; pyridoxine 5'-phosphate biosynthesis; pyridoxine 5'-phosphate from D-erythrose 4-phosphate: step 1/5. In terms of biological role, catalyzes the NAD-dependent conversion of D-erythrose 4-phosphate to 4-phosphoerythronate. This Pectobacterium carotovorum subsp. carotovorum (strain PC1) protein is D-erythrose-4-phosphate dehydrogenase.